Reading from the N-terminus, the 65-residue chain is Disintegrin CC5 (65 aa).

The Disintegrin domain maps to 1–65 (MNSAHPCCDP…SDCPRNRYKS (65 aa)). Cystine bridges form between cysteine 7-cysteine 30, cysteine 21-cysteine 27, cysteine 26-cysteine 51, and cysteine 39-cysteine 58. Positions 43-45 (RGD) match the Cell attachment site motif.

It belongs to the disintegrin family. Dimeric disintegrin subfamily. Homodimer; disulfide-linked. In terms of tissue distribution, expressed by the venom gland.

It is found in the secreted. In terms of biological role, binds and inhibits integrins alpha-IIb/beta-3 (ITGA2B/ITGB3), alpha-V/beta-3 (ITGAV/ITGB3) and alpha-5/beta-1 (ITGA5/ITGB1). This chain is Disintegrin CC5, found in Cerastes cerastes (Horned desert viper).